Here is a 320-residue protein sequence, read N- to C-terminus: Serpentine receptor class gamma-17 (320 aa).

The next 6 membrane-spanning stretches (helical) occupy residues 25–45 (AIYF…ISLL), 80–100 (IFFG…STFF), 155–175 (FIML…QVIA), 192–212 (WASL…FTIV), 237–257 (FTSI…LTFA), and 268–288 (YILQ…IMFL).

It belongs to the nematode receptor-like protein srg family.

The protein resides in the membrane. The protein is Serpentine receptor class gamma-17 (srg-17) of Caenorhabditis elegans.